The following is a 945-amino-acid chain: Bifunctional glutamine synthetase adenylyltransferase/adenylyl-removing enzyme (945 aa).

Residues 1–440 are adenylyl removase; it reads MMPLSPQLQQ…VFNELIGDDE (440 aa). The segment at 449–945 is adenylyl transferase; the sequence is AEYWRELWQD…SASWQKWLMA (497 aa).

It belongs to the GlnE family. The cofactor is Mg(2+).

It carries out the reaction [glutamine synthetase]-O(4)-(5'-adenylyl)-L-tyrosine + phosphate = [glutamine synthetase]-L-tyrosine + ADP. The catalysed reaction is [glutamine synthetase]-L-tyrosine + ATP = [glutamine synthetase]-O(4)-(5'-adenylyl)-L-tyrosine + diphosphate. Functionally, involved in the regulation of glutamine synthetase GlnA, a key enzyme in the process to assimilate ammonia. When cellular nitrogen levels are high, the C-terminal adenylyl transferase (AT) inactivates GlnA by covalent transfer of an adenylyl group from ATP to specific tyrosine residue of GlnA, thus reducing its activity. Conversely, when nitrogen levels are low, the N-terminal adenylyl removase (AR) activates GlnA by removing the adenylyl group by phosphorolysis, increasing its activity. The regulatory region of GlnE binds the signal transduction protein PII (GlnB) which indicates the nitrogen status of the cell. The protein is Bifunctional glutamine synthetase adenylyltransferase/adenylyl-removing enzyme of Klebsiella pneumoniae subsp. pneumoniae (strain ATCC 700721 / MGH 78578).